Here is a 122-residue protein sequence, read N- to C-terminus: Vitelline membrane protein Vm32E (122 aa).

Positions 1-19 (MKTVAFLAVVVLFAAFACA) are cleaved as a signal peptide. A VM domain is found at 40–79 (SVPAPPCPKNYLFSCQPNLVPAPCAQQAAPAAYGSAGAYT).

The protein belongs to the vitelline membrane family.

The protein resides in the secreted. Its function is as follows. Major early eggshell protein. The polypeptide is Vitelline membrane protein Vm32E (Drosophila persimilis (Fruit fly)).